The following is a 53-amino-acid chain: Conotoxin Cal6.23 (53 aa).

Residues 1–22 (MKLTAVLMVAVLVLTACQLITA) form the signal peptide. Cystine bridges form between Cys25-Cys40, Cys32-Cys47, and Cys39-Cys51.

It belongs to the conotoxin O1 superfamily. Expressed by the venom duct.

It is found in the secreted. Probable neurotoxin. The polypeptide is Conotoxin Cal6.23 (Californiconus californicus (California cone)).